A 499-amino-acid polypeptide reads, in one-letter code: Cobyric acid synthase (499 aa).

One can recognise a GATase cobBQ-type domain in the interval 246–441 (PIDIAIIKLP…IHGIFDGAEL (196 aa)). Cysteine 327 (nucleophile) is an active-site residue. Histidine 433 is an active-site residue.

This sequence belongs to the CobB/CobQ family. CobQ subfamily.

It functions in the pathway cofactor biosynthesis; adenosylcobalamin biosynthesis. Functionally, catalyzes amidations at positions B, D, E, and G on adenosylcobyrinic A,C-diamide. NH(2) groups are provided by glutamine, and one molecule of ATP is hydrogenolyzed for each amidation. This chain is Cobyric acid synthase, found in Clostridium kluyveri (strain NBRC 12016).